A 979-amino-acid polypeptide reads, in one-letter code: Receptor-type tyrosine-protein phosphatase-like N (979 aa).

The N-terminal stretch at 1-34 (MRRPRRPGGLGGSGGLRLLLCLLLLSSRPGGCSA) is a signal peptide. Residues 35–131 (VSAHGCLFDR…RPRDRSGLAP (97 aa)) are RESP18 homology domain. At 35–575 (VSAHGCLFDR…QTAHSTSPMR (541 aa)) the chain is on the lumenal side. Cys53 and Cys62 are disulfide-bonded. 2 stretches are compositionally biased toward basic and acidic residues: residues 112 to 127 (RIPR…RDRS) and 304 to 323 (RAED…RGEK). Disordered stretches follow at residues 112-173 (RIPR…SSSL), 289-329 (SRAR…SPAV), and 393-439 (VEGR…ARPP). Ser308 bears the Phosphoserine mark. Positions 415–433 (SPTSSEVQQVPSPVSSEPP) are enriched in low complexity. Residue Thr441 is glycosylated (O-linked (GalNAc...) threonine). The sufficient for dimerization of proICA512 stretch occupies residues 449 to 575 (SPLGQSQPTV…QTAHSTSPMR (127 aa)). N-linked (GlcNAc...) asparagine glycosylation is found at Asn506 and Asn524. A helical transmembrane segment spans residues 576-600 (SVLLTLVALAGVAGLLVALAVALCV). A sufficient for dimerization of proICA512 region spans residues 601-732 (RQHARQQDKE…PNTCATAQGE (132 aa)). At 601 to 979 (RQHARQQDKE…VNAILKALPQ (379 aa)) the chain is on the cytoplasmic side. Residues 643–680 (NRAEGPPEPSRVSSVSSQFSDAAQASPSSHSSTPSWCE) are disordered. Residues 652 to 677 (SRVSSVSSQFSDAAQASPSSHSSTPS) show a composition bias toward low complexity. The Tyrosine-protein phosphatase domain occupies 709 to 969 (LAKEWQALCA…EFALTAVAEE (261 aa)). Residue Lys754 forms a Glycyl lysine isopeptide (Lys-Gly) (interchain with G-Cter in SUMO) linkage.

Belongs to the protein-tyrosine phosphatase family. Receptor class 8 subfamily. As to quaternary structure, homodimer; shown for the unprocessed protein (proICA512) in the endoplasmic reticulum and resolved during protein maturation as ICA512-TMF seems to be predominantly monomeric in secretory granules; however, ICA512-CCF interacts with ICA512-TMF disrupting the ICA512-TMF:SNTB2 complex. The isolated lumenal RESP18 homology domain has been shown to form disulfide-linked homooligomers. Interacts (via cytoplasmic domain) with phosphorylated SNTB2; this protects PTPRN against cleavage by CAPN1 to produce ICA512-CCF. Dephosphorylation of SNTB2 upon insulin stimulation disrupts the interaction and results in PTPRN cleavage. Interacts with SNX19. ICA512-CCF interacts with PIAS4; in the nucleus. Interacts with STAT5B (phosphorylated); down-regulated by ICA512-CCF sumoylation; ICA512-CCF prevents STAT5B dephosphorylation; ICA512-CCF mediates interaction of STAT5B with PIAS4. Interacts (via RESP18 homology domain) with insulin and proinsulin. Interacts with PTPRN2, PTPRA and PTPRE. N-glycosylated. Post-translationally, O-glycosylated with core 1 or possibly core 8 glycans. In terms of processing, subject to proteolytic cleavage at multiple sites. Subject to cleavage on a pair of basic residues. On exocytosis of secretory granules in pancreatic beta-cells ICA512-TMF is transiently inserted in the plasma-membrane and cleaved by mu-type calpain CPN1 to yield ICA512-CCF. Sumoylated at two sites including Lys-754. Sumoylation decreases interaction with STAT5. As to expression, expression is restricted to neuroendocrine cells. Found in pancreas, brain and pituitary.

Its subcellular location is the membrane. The protein localises to the cytoplasmic vesicle. The protein resides in the secretory vesicle membrane. It localises to the perikaryon. It is found in the cell projection. Its subcellular location is the axon. The protein localises to the synapse. The protein resides in the cell membrane. It localises to the endosome. It is found in the nucleus. Functionally, plays a role in vesicle-mediated secretory processes. Required for normal accumulation of secretory vesicles in hippocampus, pituitary and pancreatic islets. Required for the accumulation of normal levels of insulin-containing vesicles and preventing their degradation. Plays a role in insulin secretion in response to glucose stimuli. Required for normal accumulation of the neurotransmitters norepinephrine, dopamine and serotonin in the brain. In females, but not in males, required for normal accumulation and secretion of pituitary hormones, such as luteinizing hormone (LH) and follicle-stimulating hormone (FSH). Required to maintain normal levels of renin expression and renin release. Seems to lack intrinsic enzyme activity. May regulate catalytic active protein-tyrosine phosphatases such as PTPRA through dimerization. Its function is as follows. ICA512-TMF regulates dynamics and exocytosis of insulin secretory granules (SGs); binding of ICA512-TMF to SNTB2/beta-2-syntrophin is proposed to restrain SGs mobility and exocytosis by tethering them to the actin cytoskeleton depending on UTRN; the function is inhibited by cytoplasmic ICA512-CFF dimerizing with ICA512-TMF and displacing SNTB2. ICA512-CCF translocated to the nucleus promotes expression of insulin and other granule-related genes; the function implicates binding to and regulating activity of STAT5B probably by preventing its dephosphorylation and potentially by inducing its sumoylation by recruiting PIAS4. Enhances pancreatic beta-cell proliferation by converging with signaling by STAT5B and STAT3. ICA512-CCF located in the cytoplasm regulates dynamics and exocytosis of insulin secretory granules (SGs) by dimerizing with ICA512-TMF and displacing SNTB2 thus enhancing SGs mobility and exocytosis. The protein is Receptor-type tyrosine-protein phosphatase-like N (PTPRN) of Homo sapiens (Human).